The sequence spans 386 residues: L-arabinitol 4-dehydrogenase (386 aa).

The Zn(2+) site is built by Cys55, His80, Glu81, Cys110, Cys113, Cys116, Cys124, and Glu165. Residues 192–193, Asp213, Arg218, Ile293, and 317–319 each bind NAD(+); these read PI and QYR.

Belongs to the zinc-containing alcohol dehydrogenase family. In terms of assembly, homotetramer. The cofactor is Zn(2+).

It catalyses the reaction L-arabinitol + NAD(+) = L-xylulose + NADH + H(+). It functions in the pathway carbohydrate degradation; L-arabinose degradation via L-arabinitol; D-xylulose 5-phosphate from L-arabinose (fungal route): step 2/5. Functionally, catalyzes the NAD-dependent oxidation of L-arabinitol to L-xylulose in the fungal L-arabinose catabolic pathway. L-arabinose catabolism is important for using plant material as a carbon source. Not active with NADP as cosubstrate. This is L-arabinitol 4-dehydrogenase (ladA) from Aspergillus niger (strain ATCC MYA-4892 / CBS 513.88 / FGSC A1513).